The chain runs to 411 residues: ATP-dependent Clp protease ATP-binding subunit ClpX (411 aa).

The ClpX-type ZB domain occupies 1 to 51 (MAKKKDEEYCSFCGMPRTQVNLMLEGVHAHICDECALRAGEVVREALQKFK). Zn(2+)-binding residues include cysteine 10, cysteine 13, cysteine 32, and cysteine 35. 119–126 (PTGTGKTL) is a binding site for ATP.

This sequence belongs to the ClpX chaperone family. As to quaternary structure, component of the ClpX-ClpP complex. Forms a hexameric ring that, in the presence of ATP, binds to fourteen ClpP subunits assembled into a disk-like structure with a central cavity, resembling the structure of eukaryotic proteasomes.

Functionally, ATP-dependent specificity component of the Clp protease. It directs the protease to specific substrates. Can perform chaperone functions in the absence of ClpP. The polypeptide is ATP-dependent Clp protease ATP-binding subunit ClpX (Porphyromonas gingivalis (strain ATCC 33277 / DSM 20709 / CIP 103683 / JCM 12257 / NCTC 11834 / 2561)).